We begin with the raw amino-acid sequence, 141 residues long: MMRTLFKSKIHRATVTQADLHYVGSVTVDAALMEAADLLPGELVHIVDIDNGARLETYVIEGERGSGVIGINGAAAHLVHPGDLVILISYAQVDDAEARAFVPRVVHVDADNRIVALGSDASAPVPGSRTERSPQAVVAGG.

The Schiff-base intermediate with substrate; via pyruvic acid role is filled by Ser25. Ser25 is modified (pyruvic acid (Ser)). Thr57 contacts substrate. Tyr58 (proton donor) is an active-site residue. Substrate is bound at residue 73–75 (GAA). Residues 121–141 (ASAPVPGSRTERSPQAVVAGG) form a disordered region.

The protein belongs to the PanD family. As to quaternary structure, heterooctamer of four alpha and four beta subunits. Pyruvate serves as cofactor. Is synthesized initially as an inactive proenzyme, which is activated by self-cleavage at a specific serine bond to produce a beta-subunit with a hydroxyl group at its C-terminus and an alpha-subunit with a pyruvoyl group at its N-terminus.

The protein localises to the cytoplasm. The catalysed reaction is L-aspartate + H(+) = beta-alanine + CO2. The protein operates within cofactor biosynthesis; (R)-pantothenate biosynthesis; beta-alanine from L-aspartate: step 1/1. Its function is as follows. Catalyzes the pyruvoyl-dependent decarboxylation of aspartate to produce beta-alanine. The polypeptide is Aspartate 1-decarboxylase (Streptomyces griseus subsp. griseus (strain JCM 4626 / CBS 651.72 / NBRC 13350 / KCC S-0626 / ISP 5235)).